The chain runs to 452 residues: Na(+)/H(+) antiporter NhaA (452 aa).

The next 11 membrane-spanning stretches (helical) occupy residues 27–47 (FLHI…TALI), 78–98 (LHFW…GMEI), 114–134 (ILPI…YLSF), 141–161 (IYGW…ILAL), 172–192 (IILL…IAFF), 201–221 (GLAI…ISFA), 222–242 (SAWL…VTGI), 316–336 (PWVA…VSFA), 346–366 (FLIV…GILA), 388–408 (ILLI…VSML), and 421–441 (IGVL…GLIY).

Belongs to the NhaA Na(+)/H(+) (TC 2.A.33) antiporter family.

Its subcellular location is the cell inner membrane. It catalyses the reaction Na(+)(in) + 2 H(+)(out) = Na(+)(out) + 2 H(+)(in). Functionally, na(+)/H(+) antiporter that extrudes sodium in exchange for external protons. This chain is Na(+)/H(+) antiporter NhaA, found in Bartonella bacilliformis (strain ATCC 35685 / KC583 / Herrer 020/F12,63).